We begin with the raw amino-acid sequence, 248 residues long: Isopentenyl phosphate kinase (248 aa).

7-11 contributes to the ATP binding site; the sequence is KLGGS. Substrate is bound at residue G49. G50 is an ATP binding site. Substrate-binding residues include H54 and G152. G209 and K213 together coordinate ATP.

The protein belongs to the isopentenyl phosphate kinase family. As to quaternary structure, homodimer.

The catalysed reaction is isopentenyl phosphate + ATP = isopentenyl diphosphate + ADP. Its function is as follows. Catalyzes the phosphorylation of isopentenyl phosphate (IP) to isopentenyl diphosphate (IPP). Functions in an alternate mevalonate (MVA) pathway leading to IPP, a key precursor for the biosynthesis of isoprenoid compounds such as archaeal membrane lipids. This is Isopentenyl phosphate kinase from Haloferax volcanii (strain ATCC 29605 / DSM 3757 / JCM 8879 / NBRC 14742 / NCIMB 2012 / VKM B-1768 / DS2) (Halobacterium volcanii).